Reading from the N-terminus, the 556-residue chain is Glucose-6-phosphate isomerase (556 aa).

The active-site Proton donor is the Glu364. Catalysis depends on residues His395 and Lys521.

Belongs to the GPI family.

The protein localises to the cytoplasm. It carries out the reaction alpha-D-glucose 6-phosphate = beta-D-fructose 6-phosphate. It participates in carbohydrate biosynthesis; gluconeogenesis. Its pathway is carbohydrate degradation; glycolysis; D-glyceraldehyde 3-phosphate and glycerone phosphate from D-glucose: step 2/4. In terms of biological role, catalyzes the reversible isomerization of glucose-6-phosphate to fructose-6-phosphate. The protein is Glucose-6-phosphate isomerase of Corynebacterium kroppenstedtii (strain DSM 44385 / JCM 11950 / CIP 105744 / CCUG 35717).